The sequence spans 163 residues: ADP-ribosylation factor-like protein 2-binding protein (163 aa).

It belongs to the ARL2BP family. As to quaternary structure, interacts with GTP bound ARL2 and ARL3; the complex ARL2-ARL2BP as well as ARL2BP alone, binds to SLC25A4/ANT1. Interaction with ARL2 may be required for cilia basal body localization. Interacts with STAT3; interaction is enhanced with ARL2. Found in a complex with ARL2BP, ARL2 and SLC25A6. Found in a complex with ARL2, ARL2BP and SLC25A4. Interacts with STAT2, STAT3 and STAT4.

The protein localises to the cytoplasm. Its subcellular location is the mitochondrion intermembrane space. It is found in the cytoskeleton. The protein resides in the microtubule organizing center. It localises to the centrosome. The protein localises to the nucleus. Its subcellular location is the spindle. It is found in the cilium basal body. Together with ARL2, plays a role in the nuclear translocation, retention and transcriptional activity of STAT3. May play a role as an effector of ARL2. The sequence is that of ADP-ribosylation factor-like protein 2-binding protein (ARL2BP) from Macaca fascicularis (Crab-eating macaque).